Consider the following 556-residue polypeptide: 2-isopropylmalate synthase (556 aa).

In terms of domain architecture, Pyruvate carboxyltransferase spans 33–307; the sequence is PIWCSSDLRD…HPQLDFSDID (275 aa). 4 residues coordinate Mg(2+): D42, H246, H248, and N282. The segment at 439–556 is regulatory domain; sequence ATSPYALASH…AVTQAEAKAA (118 aa).

It belongs to the alpha-IPM synthase/homocitrate synthase family. LeuA type 2 subfamily. As to quaternary structure, homodimer. It depends on Mg(2+) as a cofactor.

The protein localises to the cytoplasm. It catalyses the reaction 3-methyl-2-oxobutanoate + acetyl-CoA + H2O = (2S)-2-isopropylmalate + CoA + H(+). Its pathway is amino-acid biosynthesis; L-leucine biosynthesis; L-leucine from 3-methyl-2-oxobutanoate: step 1/4. Functionally, catalyzes the condensation of the acetyl group of acetyl-CoA with 3-methyl-2-oxobutanoate (2-ketoisovalerate) to form 3-carboxy-3-hydroxy-4-methylpentanoate (2-isopropylmalate). This Pseudomonas paraeruginosa (strain DSM 24068 / PA7) (Pseudomonas aeruginosa (strain PA7)) protein is 2-isopropylmalate synthase.